A 211-amino-acid polypeptide reads, in one-letter code: Thiamine-phosphate synthase (211 aa).

4-amino-2-methyl-5-(diphosphooxymethyl)pyrimidine-binding positions include 36–40 (QLRDK) and asparagine 68. The Mg(2+) site is built by aspartate 69 and aspartate 88. Position 107 (serine 107) interacts with 4-amino-2-methyl-5-(diphosphooxymethyl)pyrimidine. 133–135 (TKS) provides a ligand contact to 2-[(2R,5Z)-2-carboxy-4-methylthiazol-5(2H)-ylidene]ethyl phosphate. Lysine 136 lines the 4-amino-2-methyl-5-(diphosphooxymethyl)pyrimidine pocket. Residues glycine 164 and 184–185 (IS) each bind 2-[(2R,5Z)-2-carboxy-4-methylthiazol-5(2H)-ylidene]ethyl phosphate.

This sequence belongs to the thiamine-phosphate synthase family. It depends on Mg(2+) as a cofactor.

The enzyme catalyses 2-[(2R,5Z)-2-carboxy-4-methylthiazol-5(2H)-ylidene]ethyl phosphate + 4-amino-2-methyl-5-(diphosphooxymethyl)pyrimidine + 2 H(+) = thiamine phosphate + CO2 + diphosphate. It catalyses the reaction 2-(2-carboxy-4-methylthiazol-5-yl)ethyl phosphate + 4-amino-2-methyl-5-(diphosphooxymethyl)pyrimidine + 2 H(+) = thiamine phosphate + CO2 + diphosphate. It carries out the reaction 4-methyl-5-(2-phosphooxyethyl)-thiazole + 4-amino-2-methyl-5-(diphosphooxymethyl)pyrimidine + H(+) = thiamine phosphate + diphosphate. The protein operates within cofactor biosynthesis; thiamine diphosphate biosynthesis; thiamine phosphate from 4-amino-2-methyl-5-diphosphomethylpyrimidine and 4-methyl-5-(2-phosphoethyl)-thiazole: step 1/1. In terms of biological role, condenses 4-methyl-5-(beta-hydroxyethyl)thiazole monophosphate (THZ-P) and 2-methyl-4-amino-5-hydroxymethyl pyrimidine pyrophosphate (HMP-PP) to form thiamine monophosphate (TMP). This chain is Thiamine-phosphate synthase, found in Halalkalibacterium halodurans (strain ATCC BAA-125 / DSM 18197 / FERM 7344 / JCM 9153 / C-125) (Bacillus halodurans).